Here is a 305-residue protein sequence, read N- to C-terminus: Deoxyhypusine hydroxylase (305 aa).

2 HEAT-like PBS-type repeats span residues 54–80 and 87–113; these read LKHE…VLKD and VRHE…YAED. Positions 56, 89, and 90 each coordinate Fe cation. A disordered region spans residues 137–160; it reads EQTKDGTDENPYCSVDPAPPAQRK. HEAT-like PBS-type repeat units lie at residues 178–204, 209–235, and 242–268; these read DRYR…GLQC, FRHE…ALEK, and VRHE…YRKD. Fe cation is bound by residues His211, His244, and Glu245.

The protein belongs to the deoxyhypusine hydroxylase family. It depends on Fe(2+) as a cofactor.

The enzyme catalyses [eIF5A protein]-deoxyhypusine + AH2 + O2 = [eIF5A protein]-hypusine + A + H2O. It participates in protein modification; eIF5A hypusination. Its function is as follows. Catalyzes the hydroxylation of the N(6)-(4-aminobutyl)-L-lysine intermediate produced by deoxyhypusine synthase/DHPS on a critical lysine of the eukaryotic translation initiation factor 5A/eIF-5A. This is the second step of the post-translational modification of that lysine into an unusual amino acid residue named hypusine. Hypusination is unique to mature eIF-5A factor and is essential for its function. In Danio rerio (Zebrafish), this protein is Deoxyhypusine hydroxylase (dohh).